A 340-amino-acid polypeptide reads, in one-letter code: Protein HP_1247 (340 aa).

Seems to interact with H.pylori HolB.

Functionally, could be the functional equivalent of DNA polymerase III delta subunit (HolA). This chain is Protein HP_1247, found in Helicobacter pylori (strain ATCC 700392 / 26695) (Campylobacter pylori).